Here is a 211-residue protein sequence, read N- to C-terminus: Histidine biosynthesis bifunctional protein HisIE (211 aa).

Residues 1–107 are phosphoribosyl-AMP cyclohydrolase; that stretch reads MNKLIDFSKG…FNSEIESRFK (107 aa). Positions 108-211 are phosphoribosyl-ATP pyrophosphohydrolase; it reads IQALAQTIHQ…KGERKEVREW (104 aa).

In the N-terminal section; belongs to the PRA-CH family. The protein in the C-terminal section; belongs to the PRA-PH family.

The protein resides in the cytoplasm. It carries out the reaction 1-(5-phospho-beta-D-ribosyl)-ATP + H2O = 1-(5-phospho-beta-D-ribosyl)-5'-AMP + diphosphate + H(+). The enzyme catalyses 1-(5-phospho-beta-D-ribosyl)-5'-AMP + H2O = 1-(5-phospho-beta-D-ribosyl)-5-[(5-phospho-beta-D-ribosylamino)methylideneamino]imidazole-4-carboxamide. Its pathway is amino-acid biosynthesis; L-histidine biosynthesis; L-histidine from 5-phospho-alpha-D-ribose 1-diphosphate: step 2/9. It participates in amino-acid biosynthesis; L-histidine biosynthesis; L-histidine from 5-phospho-alpha-D-ribose 1-diphosphate: step 3/9. This is Histidine biosynthesis bifunctional protein HisIE from Staphylococcus epidermidis (strain ATCC 35984 / DSM 28319 / BCRC 17069 / CCUG 31568 / BM 3577 / RP62A).